Reading from the N-terminus, the 700-residue chain is pH-response regulator protein palI/prr-5 (700 aa).

Residues 1–8 (MLRPATPL) lie on the Cytoplasmic side of the membrane. The chain crosses the membrane as a helical span at residues 9-29 (AVLLFAAFGLLTLATISTPII). Residues 30-90 (KQIPLSSFEI…PRATRSTLSS (61 aa)) lie on the Extracellular side of the membrane. Residues 91-111 (ILIVHPVAALITLINFVLAIV) form a helical membrane-spanning segment. The Cytoplasmic segment spans residues 112-123 (AHFHSPSHSARY). A helical transmembrane segment spans residues 124 to 144 (LLILFIVSFVDFIVCLLCFLV). At 145–152 (DVLLFIPH) the chain is on the extracellular side. A helical membrane pass occupies residues 153-173 (LSWGSYIVVAATILVAFCGLV). Residues 174–700 (TCAMRRTLVN…GNMPRAAGPR (527 aa)) lie on the Cytoplasmic side of the membrane. Disordered regions lie at residues 226–491 (SGAN…GIRD), 507–560 (VPDP…PISE), and 573–700 (DVDP…AGPR). Basic and acidic residues predominate over residues 234-252 (KLPEFTTFEKKDDRSEERI). The span at 320–378 (GRGGMPPGGYRGRGGFPGPGRGGGPPQNGRGGYGPPGRGRGGYGPPPRGYGGPGPRGGR) shows a compositional bias: gly residues. Residues 414 to 424 (SPYANRQQSPG) are compositionally biased toward polar residues. Polar residues-rich tracts occupy residues 593 to 603 (SMQSPPASNSY) and 615 to 637 (ESENSNFTSISQRGINPRWNSAN). The span at 657–671 (VVPRRPVNRPGAGPA) shows a compositional bias: low complexity.

Belongs to the palI/RIM9 family.

The protein resides in the cell membrane. Required for the proteolytic cleavage of the transcription factor pacc-1 in response to alkaline ambient pH. This chain is pH-response regulator protein palI/prr-5 (prr-5), found in Neurospora crassa (strain ATCC 24698 / 74-OR23-1A / CBS 708.71 / DSM 1257 / FGSC 987).